The following is a 391-amino-acid chain: DNA replication and repair protein RecF (391 aa).

Residue 30-37 (GLNGQGKT) coordinates ATP.

It belongs to the RecF family.

It localises to the cytoplasm. Functionally, the RecF protein is involved in DNA metabolism; it is required for DNA replication and normal SOS inducibility. RecF binds preferentially to single-stranded, linear DNA. It also seems to bind ATP. The polypeptide is DNA replication and repair protein RecF (Kineococcus radiotolerans (strain ATCC BAA-149 / DSM 14245 / SRS30216)).